The chain runs to 753 residues: 5-methyltetrahydropteroyltriglutamate--homocysteine methyltransferase (753 aa).

Residues 17–20 and Lys-117 each bind 5-methyltetrahydropteroyltri-L-glutamate; that span reads RELK. L-homocysteine-binding positions include 431–433 and Glu-484; that span reads IGS. Residues 431 to 433 and Glu-484 contribute to the L-methionine site; that span reads IGS. 5-methyltetrahydropteroyltri-L-glutamate is bound by residues 515 to 516 and Trp-561; that span reads RC. An L-homocysteine-binding site is contributed by Asp-599. Asp-599 is an L-methionine binding site. Residue Glu-605 participates in 5-methyltetrahydropteroyltri-L-glutamate binding. 3 residues coordinate Zn(2+): His-641, Cys-643, and Glu-665. The active-site Proton donor is the His-694. Cys-726 is a binding site for Zn(2+).

It belongs to the vitamin-B12 independent methionine synthase family. Requires Zn(2+) as cofactor.

The enzyme catalyses 5-methyltetrahydropteroyltri-L-glutamate + L-homocysteine = tetrahydropteroyltri-L-glutamate + L-methionine. Its pathway is amino-acid biosynthesis; L-methionine biosynthesis via de novo pathway; L-methionine from L-homocysteine (MetE route): step 1/1. Its function is as follows. Catalyzes the transfer of a methyl group from 5-methyltetrahydrofolate to homocysteine resulting in methionine formation. This Escherichia coli O157:H7 (strain EC4115 / EHEC) protein is 5-methyltetrahydropteroyltriglutamate--homocysteine methyltransferase.